The chain runs to 443 residues: Probable lipase C16A3.12c (443 aa).

At 1–16 the chain is on the cytoplasmic side; the sequence is MSGFNKNQIYWGDYVG. Residues 17–37 form a helical; Signal-anchor for type II membrane protein membrane-spanning segment; it reads VIAAFVGVYTELVARIFIYMI. Topologically, residues 38–443 are lumenal; that stretch reads PERVREWFRV…KHFVKQNGFH (406 aa). The 295-residue stretch at 116 to 410 folds into the AB hydrolase-1 domain; that stretch reads VVYCHHGLMT…HYEHLDFLWG (295 aa). Residues asparagine 134 and asparagine 177 are each glycosylated (N-linked (GlcNAc...) asparagine). The active-site Nucleophile is the serine 210. N-linked (GlcNAc...) asparagine glycans are attached at residues asparagine 304 and asparagine 335. Residues aspartate 378 and histidine 404 each act as charge relay system in the active site.

This sequence belongs to the AB hydrolase superfamily. Lipase family.

It is found in the cytoplasm. The protein resides in the vacuole. The protein localises to the membrane. Its function is as follows. Probable lipase. The sequence is that of Probable lipase C16A3.12c from Schizosaccharomyces pombe (strain 972 / ATCC 24843) (Fission yeast).